A 230-amino-acid chain; its full sequence is UPF0494 membrane protein PB2B2.14c (230 aa).

The next 3 membrane-spanning stretches (helical) occupy residues 78–98, 120–140, and 148–168; these read WPLLIIWCILIVFAIDKNFEV, IWGPIAIYICLFVLLLLGLIY, and AIPLISIVIAAVVVIIAVAMV.

This sequence belongs to the UPF0494 family.

Its subcellular location is the membrane. The protein is UPF0494 membrane protein PB2B2.14c of Schizosaccharomyces pombe (strain 972 / ATCC 24843) (Fission yeast).